The following is a 356-amino-acid chain: Tyrosine recombinase XerS (356 aa).

A Core-binding (CB) domain is found at 16 to 121; it reads IMPWYVLEYY…ALSSLFKYLT (106 aa). The region spanning 169 to 354 is the Tyr recombinase domain; that stretch reads EFLEYIDCEY…VNDEQKNALD (186 aa). Residues Arg210, Lys234, His306, Arg309, and His332 contribute to the active site. Tyr341 acts as the O-(3'-phospho-DNA)-tyrosine intermediate in catalysis.

The protein belongs to the 'phage' integrase family. XerS subfamily.

It is found in the cytoplasm. With respect to regulation, ftsK is required for recombination. Site-specific tyrosine recombinase, which acts by catalyzing the cutting and rejoining of the recombining DNA molecules. Essential to convert dimers of the bacterial chromosome into monomers to permit their segregation at cell division. This Streptococcus agalactiae serotype Ia (strain ATCC 27591 / A909 / CDC SS700) protein is Tyrosine recombinase XerS.